Here is a 418-residue protein sequence, read N- to C-terminus: Thyroid hormone receptor alpha-B (418 aa).

The segment at 1-40 (MDQNLSGLDCLSEPDEKRWPDGKRKRKNSQCMGKSGMSGD) is disordered. Residues 1–60 (MDQNLSGLDCLSEPDEKRWPDGKRKRKNSQCMGKSGMSGDSLVSLPPAGYIPSYLDKDEP) are modulating. 2 NR C4-type zinc fingers span residues 61-81 (CVVCSDKATGYHYRCITCEGC) and 99-123 (CKYDGCCIIDKITRNQCQLCRFKKC). Residues 61-128 (CVVCSDKATG…RFKKCIAVGM (68 aa)) constitute a DNA-binding region (nuclear receptor). In terms of domain architecture, NR LBD spans 171-415 (EEWELIRIVT…PPLFLEVFED (245 aa)).

The protein belongs to the nuclear hormone receptor family. NR1 subfamily. As to quaternary structure, binds to thyroid hormone receptor element (TRE) weakly as homodimers and monomers, but binds TRE with much higher affinity as heterodimers with retinoid X receptors. Can bind DNA as a heterodimer with either rxra or rxrg.

It is found in the nucleus. Its function is as follows. High affinity receptor for triiodothyronine (T3). The chain is Thyroid hormone receptor alpha-B (thra-b) from Xenopus laevis (African clawed frog).